Consider the following 795-residue polypeptide: Protocadherin beta-5 (795 aa).

Residues 1 to 30 (METALAKTPQKRQVMFLAILLLLWEAGSEA) form the signal peptide. Residues 31–689 (VRYSIPEETE…AQADSLTVYL (659 aa)) lie on the Extracellular side of the membrane. Cadherin domains follow at residues 35–133 (IPEE…SPEF), 138–242 (MLLK…APEF), 247–346 (YEVQ…APEL), 351–450 (LSSP…APAF), and 455–560 (YTLF…SPFV). Residue Asn-169 is glycosylated (N-linked (GlcNAc...) asparagine). Lys-296 carries the N6-acetyllysine modification. 2 N-linked (GlcNAc...) asparagine glycosylation sites follow: Asn-417 and Asn-435. Asn-566 carries an N-linked (GlcNAc...) asparagine glycan. Residues 567-670 (GSAPCTELVP…LVDGFSQPYL (104 aa)) enclose the Cadherin 6 domain. A helical membrane pass occupies residues 690 to 710 (VVALASVSSLFLFSVLLFVAV). Topologically, residues 711-795 (RLCRRSRAAP…AAFRNSFGLN (85 aa)) are cytoplasmic.

The protein localises to the cell membrane. In terms of biological role, potential calcium-dependent cell-adhesion protein. May be involved in the establishment and maintenance of specific neuronal connections in the brain. This Pan troglodytes (Chimpanzee) protein is Protocadherin beta-5 (PCDHB5).